Consider the following 578-residue polypeptide: Cholesterol oxidase (578 aa).

5 residues coordinate FAD: Gly15, Glu34, Gly85, Ala90, and Val230. The active-site Proton acceptor is His470. FAD is bound at residue Gly503. The segment at Trp529–Ile551 is disordered. The segment covering Gly533–Arg546 has biased composition (basic and acidic residues).

Belongs to the GMC oxidoreductase family. FAD is required as a cofactor.

The protein resides in the secreted. The enzyme catalyses cholesterol + O2 = cholest-5-en-3-one + H2O2. The catalysed reaction is cholest-5-en-3-one = cholest-4-en-3-one. The protein operates within steroid metabolism; cholesterol degradation. Its function is as follows. Bifunctional enzyme that catalyzes the oxidation and isomerization of cholesterol to cholestenone (cholest-4-en-3-one), an initial step in the cholesterol degradation process. Contributes to virulence. The sequence is that of Cholesterol oxidase (choD) from Mycobacterium tuberculosis (strain CDC 1551 / Oshkosh).